The primary structure comprises 141 residues: Large ribosomal subunit protein uL11 (141 aa).

The protein belongs to the universal ribosomal protein uL11 family. Part of the ribosomal stalk of the 50S ribosomal subunit. Interacts with L10 and the large rRNA to form the base of the stalk. L10 forms an elongated spine to which L12 dimers bind in a sequential fashion forming a multimeric L10(L12)X complex. In terms of processing, one or more lysine residues are methylated.

Functionally, forms part of the ribosomal stalk which helps the ribosome interact with GTP-bound translation factors. In Campylobacter jejuni subsp. jejuni serotype O:6 (strain 81116 / NCTC 11828), this protein is Large ribosomal subunit protein uL11.